A 265-amino-acid polypeptide reads, in one-letter code: UPF0294 protein KPK_4510 (265 aa).

The protein belongs to the UPF0294 family.

The protein resides in the cytoplasm. This is UPF0294 protein KPK_4510 from Klebsiella pneumoniae (strain 342).